The primary structure comprises 36 residues: Mu-agatoxin-Aa1a (36 aa).

Cystine bridges form between C2-C17, C9-C22, C16-C32, and C24-C30. An Asparagine amide modification is found at N36.

It belongs to the neurotoxin 07 (Beta/delta-agtx) family. 04 (aga-5) subfamily. As to expression, expressed by the venom gland.

It localises to the secreted. In terms of biological role, insecticidal neurotoxin that induces an irreversible spastic paralysis when injected into insects. Modifies presynaptic voltage-gated sodium channels (Nav), causing them to open at the normal resting potential of the nerve. This leads to spontaneous release of neurotransmitter and repetitive action potentials in motor neurons. The protein is Mu-agatoxin-Aa1a of Agelenopsis aperta (North American funnel-web spider).